A 194-amino-acid polypeptide reads, in one-letter code: Putative manganese efflux pump MntP (194 aa).

6 helical membrane passes run 3–23 (PITILLIGIAMSTDAFAAAIG), 37–57 (LYVAVIFGVIETATPIAGWLL), 65–85 (IATFDHWIAFGLLSGLGIHMI), 112–132 (LAATALATSIDAAAIGISLAF), 139–159 (IVAAVIGLCTFTMVIFGVMLG), and 170–190 (AEIVGGIILIIVGSTILYEHL).

The protein belongs to the MntP (TC 9.B.29) family.

Its subcellular location is the cell inner membrane. In terms of biological role, probably functions as a manganese efflux pump. The chain is Putative manganese efflux pump MntP from Xylella fastidiosa (strain 9a5c).